Reading from the N-terminus, the 635-residue chain is Dual specificity protein kinase zak2 (635 aa).

Protein kinase domains are found at residues 9–249 (WEEI…HRLI) and 299–585 (NKDD…QIYF). ATP-binding positions include 15–23 (IGSCNSKSR) and K45. The active-site Proton acceptor is D124. ATP-binding positions include 305–313 (GGDGFFSVV) and K326. The active-site Proton acceptor is the D427.

This sequence in the N-terminal section; belongs to the protein kinase superfamily. Ser/Thr protein kinase family. It in the C-terminal section; belongs to the protein kinase superfamily. TKL Tyr protein kinase family. In terms of processing, C-terminal tyrosine kinase domain is capable of autophosphorylation, in vitro. As to expression, zakA and zak2 are coexpressed in prestalk cell population, zakA is enriched in pstB populations and zak1 in pstA populations. ZakA and zak2 are coexpressed in prespore cells, zakA expression levels are 10 fold higher than zak2.

The catalysed reaction is L-seryl-[protein] + ATP = O-phospho-L-seryl-[protein] + ADP + H(+). The enzyme catalyses L-threonyl-[protein] + ATP = O-phospho-L-threonyl-[protein] + ADP + H(+). It carries out the reaction L-tyrosyl-[protein] + ATP = O-phospho-L-tyrosyl-[protein] + ADP + H(+). Positive regulator of gsk3/gskA activity required for cell pattern formation and a downstream effector of carC. The kinases, gsk3/gskA, zakA and zak2, form part of a signaling pathway that responds to extracellular cyclic AMP. The pathway has a role in transcriptional regulation; required to direct prespore/spore fates during development. Zak2 negatively regulates prestalk differentiation by regulating expression of ecmA. Phosphorylates Y-214 of gsk3/gskA, in vitro. The sequence is that of Dual specificity protein kinase zak2 (zak2) from Dictyostelium discoideum (Social amoeba).